The primary structure comprises 202 residues: ATP-dependent Clp protease proteolytic subunit (202 aa).

S106 acts as the Nucleophile in catalysis. H131 is an active-site residue.

This sequence belongs to the peptidase S14 family. Fourteen ClpP subunits assemble into 2 heptameric rings which stack back to back to give a disk-like structure with a central cavity, resembling the structure of eukaryotic proteasomes.

Its subcellular location is the cytoplasm. The enzyme catalyses Hydrolysis of proteins to small peptides in the presence of ATP and magnesium. alpha-casein is the usual test substrate. In the absence of ATP, only oligopeptides shorter than five residues are hydrolyzed (such as succinyl-Leu-Tyr-|-NHMec, and Leu-Tyr-Leu-|-Tyr-Trp, in which cleavage of the -Tyr-|-Leu- and -Tyr-|-Trp bonds also occurs).. In terms of biological role, cleaves peptides in various proteins in a process that requires ATP hydrolysis. Has a chymotrypsin-like activity. Plays a major role in the degradation of misfolded proteins. In Acidovorax ebreus (strain TPSY) (Diaphorobacter sp. (strain TPSY)), this protein is ATP-dependent Clp protease proteolytic subunit.